A 498-amino-acid polypeptide reads, in one-letter code: Glycerol kinase (498 aa).

Threonine 12 is an ADP binding site. Residues threonine 12, threonine 13, and serine 14 each contribute to the ATP site. Sn-glycerol 3-phosphate is bound at residue threonine 12. Arginine 16 contributes to the ADP binding site. 4 residues coordinate sn-glycerol 3-phosphate: arginine 82, glutamate 83, tyrosine 134, and aspartate 244. 5 residues coordinate glycerol: arginine 82, glutamate 83, tyrosine 134, aspartate 244, and glutamine 245. Residues threonine 266 and glycine 309 each coordinate ADP. ATP is bound by residues threonine 266, glycine 309, glutamine 313, and glycine 410. Glycine 410 and asparagine 414 together coordinate ADP.

It belongs to the FGGY kinase family. Homotetramer and homodimer (in equilibrium).

It carries out the reaction glycerol + ATP = sn-glycerol 3-phosphate + ADP + H(+). It functions in the pathway polyol metabolism; glycerol degradation via glycerol kinase pathway; sn-glycerol 3-phosphate from glycerol: step 1/1. With respect to regulation, activated by phosphorylation and inhibited by fructose 1,6-bisphosphate (FBP). Its function is as follows. Key enzyme in the regulation of glycerol uptake and metabolism. Catalyzes the phosphorylation of glycerol to yield sn-glycerol 3-phosphate. This chain is Glycerol kinase, found in Natranaerobius thermophilus (strain ATCC BAA-1301 / DSM 18059 / JW/NM-WN-LF).